A 655-amino-acid polypeptide reads, in one-letter code: A-type voltage-gated potassium channel KCND3 (655 aa).

Residues 1–182 (MAAGVAAWLP…FENPHTSTLA (182 aa)) are Cytoplasmic-facing. An interaction with KCNIP1 and KCNIP2 region spans residues 6-21 (AAWLPFARAAAIGWMP). The interval 70-78 (EKEFFFNED) is interaction with KCNIP1. Positions 104, 110, 131, and 132 each coordinate Zn(2+). Residue Ser153 is modified to Phosphoserine. Residues 183–204 (LVFYYVTGFFIAVSVITNVVET) traverse the membrane as a helical segment. At 205-223 (VPCGTVPGSKELPCGERYS) the chain is on the extracellular side. The helical transmembrane segment at 224–246 (VAFFCLDTACVMIFTVEYLLRLF) threads the bilayer. Over 247–253 (AAPSRYR) the chain is Cytoplasmic. The helical transmembrane segment at 254–277 (FIRSVMSIIDVVAIMPYYIGLVMT) threads the bilayer. Residues 278–283 (NNEDVS) lie on the Extracellular side of the membrane. The helical; Voltage-sensor transmembrane segment at 284-306 (GAFVTLRVFRVFRIFKFSRHSQG) threads the bilayer. Residues 307-318 (LRILGYTLKSCA) lie on the Cytoplasmic side of the membrane. A helical membrane pass occupies residues 319 to 343 (SELGFLLFSLTMAIIIFATVMFYAE). The Extracellular portion of the chain corresponds to 344-352 (KGSSASKFT). The segment at residues 353-366 (SIPASFWYTIVTMT) is an intramembrane region (helical). K(+) contacts are provided by Thr367, Leu368, Gly369, and Tyr370. Positions 367–372 (TLGYGD) match the Selectivity filter motif. An intramembrane segment occupies 367 to 374 (TLGYGDMV). A helical transmembrane segment spans residues 378–400 (IAGKIFGSICSLSGVLVIALPVP). At 401-655 (VIVSNFSRIY…ASNVVKVSAL (255 aa)) the chain is on the cytoplasmic side. Thr459 is subject to Phosphothreonine. The tract at residues 470–487 (SLIESQHHHLLHCLEKTT) is interaction with KCNIP1 and KCNIP2. Residues 472 to 487 (IESQHHHLLHCLEKTT) form a mediates dendritic targeting region. Polar residues predominate over residues 525–548 (MQNYPSTRSPSLSSHPGLTTTCCS). Positions 525-565 (MQNYPSTRSPSLSSHPGLTTTCCSRRSKKTTHLPNSNLPAT) are disordered. Ser569 carries the phosphoserine; by CaMK2D modification. The residue at position 585 (Ser585) is a Phosphoserine. Residues 615 to 655 (ISIPTPPALTPEGESRPPPASPGPNTNIPSIASNVVKVSAL) form a disordered region. Positions 637 to 647 (GPNTNIPSIAS) are enriched in polar residues.

It belongs to the potassium channel family. D (Shal) (TC 1.A.1.2) subfamily. Kv4.3/KCND3 sub-subfamily. In terms of assembly, homotetramer. Heterotetramer with KCND2. Associates with the regulatory subunits KCNIP3 and KCNIP4. Interacts with KCNE1, KCNE2, SCN1B and KCNAB1 and DLG1. Component of heteromultimeric potassium channels. Identified in potassium channel complexes containing KCND1, KCND2, KCND3, KCNIP1, KCNIP2, KCNIP3, KCNIP4, DPP6 and DPP10. Interacts with KCNIP1; each KCNIP1 monomer interacts with two adjacent KCND3 subunits, through both the N-terminal inactivation ball of a KCND3 subunit and a C-terminal helix from the adjacent KCND3 subunit, clamping them together; this interaction stabilizes the tetrameric form and modulates the channel gating kinetics namely channel activation and inactivation kinetics and rate of recovery from inactivation. Interacts with DPP6; this interaction modulates the channel gating kinetics namely channel activation and inactivation kinetics and rate of recovery from inactivation. Interacts with KCNIP2; each KCNIP2 monomer interacts with two adjacent KCND3 subunits, through both the N-terminal inactivation ball of a KCND3 subunit and a C-terminal helix from the adjacent KCND3 subunit, clamping them together; this interaction modulates the channel gating kinetics. Regulated through phosphorylation at Ser-569 by CaMK2D. As to expression, highly expressed in heart and brain, in particular in cortex, cerebellum, amygdala and caudate nucleus. Detected at lower levels in liver, skeletal muscle, kidney and pancreas.

The protein resides in the cell membrane. Its subcellular location is the sarcolemma. The protein localises to the cell projection. It localises to the dendrite. It carries out the reaction K(+)(in) = K(+)(out). Functionally, pore-forming (alpha) subunit of voltage-gated A-type potassium channels that mediates transmembrane potassium transport in excitable membranes, in brain and heart. In cardiomyocytes, may generate the transient outward potassium current I(To). In neurons, may conduct the transient subthreshold somatodendritic A-type potassium current (ISA). Kinetics properties are characterized by fast activation at subthreshold membrane potentials, rapid inactivation, and quick recovery from inactivation. Channel properties are modulated by interactions with regulatory subunits. Interaction with the regulatory subunits KCNIP1 or KCNIP2 modulates the channel gating kinetics namely channel activation and inactivation kinetics and rate of recovery from inactivation. Likewise, interaction with DPP6 modulates the channel gating kinetics namely channel activation and inactivation kinetics. The chain is A-type voltage-gated potassium channel KCND3 (KCND3) from Homo sapiens (Human).